The primary structure comprises 233 residues: Ribosome maturation protein SDO1 homolog (233 aa).

The protein belongs to the SDO1/SBDS family.

This is Ribosome maturation protein SDO1 homolog from Aeropyrum pernix (strain ATCC 700893 / DSM 11879 / JCM 9820 / NBRC 100138 / K1).